Here is a 404-residue protein sequence, read N- to C-terminus: Keratin, type I cuticular Ha3-I (404 aa).

A head region spans residues 1–56 (MPYNCCLPAMSCRTSCSSRPCVPPSCHGCTLPGACNIPANVGNCNWFCEGSFNGNE). Residues 56-367 (EKETMQFLND…GLLESEDCKL (312 aa)) form the IF rod domain. A coil 1A region spans residues 57 to 91 (KETMQFLNDRLASYMEKVRQLERENAELECRIQER). A linker 1 region spans residues 92–102 (NQQQDPLVCPA). The interval 103–203 (YQAYFRTIEE…HEQEVNTLRC (101 aa)) is coil 1B. The interval 204–219 (QLGDRLNVEVDAAPTV) is linker 12. Residues 220-363 (DLNRVLNETR…NTYRGLLESE (144 aa)) form a coil 2 region. The interval 364–404 (DCKLPCNPCATTNACDKPIGPCVPNPCVTRPRCGPCNTFVR) is tail.

This sequence belongs to the intermediate filament family.

The protein is Keratin, type I cuticular Ha3-I of Mus musculus (Mouse).